Consider the following 236-residue polypeptide: MADDWESAADSEIVIRPNATNNINKWEGEDDDEDVKESWEDEEEKKDEEKPTKTEAPVKTKPNKALKAKLEEQERLNEEEERKRLANMTAEEKLAEKLRLQKIQEESDLKSALDTFGVTSIGGGLDAFNPQSKEEFKEFGATLSWKVAQYRESVHFPEFIEDLVRSLCVNLSAADIKKVKMSVESLHSEKQKMEKANAKKSAAKAKGKVSLRKESDDIDDYQKYGNDFTDDYDDFM.

2 disordered regions span residues 1–88 and 188–236; these read MADD…LANM and SEKQ…DDFM. Positions 28–46 are enriched in acidic residues; it reads GEDDDEDVKESWEDEEEKK. Basic and acidic residues-rich tracts occupy residues 47 to 58, 68 to 88, and 188 to 197; these read DEEKPTKTEAPV, AKLEEQERLNEEEERKRLANM, and SEKQKMEKAN. Coiled coils occupy residues 61–112 and 174–209; these read KPNK…LKSA and ADIKKVKMSVESLHSEKQKMEKANAKKSAAKAKGKV. Over residues 201-210 the composition is skewed to basic residues; the sequence is SAAKAKGKVS.

It belongs to the eIF-3 subunit J family. Component of the eukaryotic translation initiation factor 3 (eIF-3) complex. The eIF-3 complex interacts with pix.

The protein localises to the cytoplasm. Functionally, component of the eukaryotic translation initiation factor 3 (eIF-3) complex, which is involved in protein synthesis of a specialized repertoire of mRNAs and, together with other initiation factors, stimulates binding of mRNA and methionyl-tRNAi to the 40S ribosome. The eIF-3 complex specifically targets and initiates translation of a subset of mRNAs involved in cell proliferation. The protein is Eukaryotic translation initiation factor 3 subunit J of Drosophila virilis (Fruit fly).